The chain runs to 90 residues: Small ribosomal subunit protein bS20 (90 aa).

Basic and acidic residues predominate over residues 1–11 (MANIKSSEKDI). The tract at residues 1 to 29 (MANIKSSEKDIRRTKRRNAANSQNRSRLR) is disordered.

It belongs to the bacterial ribosomal protein bS20 family.

Its function is as follows. Binds directly to 16S ribosomal RNA. The protein is Small ribosomal subunit protein bS20 of Leptospira borgpetersenii serovar Hardjo-bovis (strain JB197).